Consider the following 123-residue polypeptide: Small ribosomal subunit protein bS16 (123 aa).

Residues 87–123 form a disordered region; sequence VKNNPVKAKPGKRAQERAAEKAQKVADAAAAAADAAE. Basic and acidic residues predominate over residues 99-110; it reads RAQERAAEKAQK. Low complexity predominate over residues 111-123; the sequence is VADAAAAAADAAE.

This sequence belongs to the bacterial ribosomal protein bS16 family.

The protein is Small ribosomal subunit protein bS16 of Rhizobium johnstonii (strain DSM 114642 / LMG 32736 / 3841) (Rhizobium leguminosarum bv. viciae).